The sequence spans 124 residues: Putative B3 domain-containing protein At1g51970 (124 aa).

Positions 18 to 124 form a DNA-binding region, TF-B3; sequence VLKKNLTESD…SRRFLFHHIN (107 aa).

It localises to the nucleus. This chain is Putative B3 domain-containing protein At1g51970, found in Arabidopsis thaliana (Mouse-ear cress).